A 157-amino-acid polypeptide reads, in one-letter code: Putative pre-16S rRNA nuclease (157 aa).

This sequence belongs to the YqgF nuclease family.

It localises to the cytoplasm. In terms of biological role, could be a nuclease involved in processing of the 5'-end of pre-16S rRNA. This Nitrosomonas eutropha (strain DSM 101675 / C91 / Nm57) protein is Putative pre-16S rRNA nuclease.